Reading from the N-terminus, the 207-residue chain is Dephospho-CoA kinase (207 aa).

The 198-residue stretch at 10–207 (ILGLTGGIGS…FYLTLRGGQP (198 aa)) folds into the DPCK domain. 18–23 (GSGKSA) lines the ATP pocket.

This sequence belongs to the CoaE family.

It is found in the cytoplasm. It catalyses the reaction 3'-dephospho-CoA + ATP = ADP + CoA + H(+). It participates in cofactor biosynthesis; coenzyme A biosynthesis; CoA from (R)-pantothenate: step 5/5. Functionally, catalyzes the phosphorylation of the 3'-hydroxyl group of dephosphocoenzyme A to form coenzyme A. This is Dephospho-CoA kinase from Pseudomonas putida (Arthrobacter siderocapsulatus).